Here is a 257-residue protein sequence, read N- to C-terminus: Ribonuclease PH (257 aa).

Phosphate is bound by residues arginine 86 and glycine 124–arginine 126.

It belongs to the RNase PH family. In terms of assembly, homohexameric ring arranged as a trimer of dimers.

It carries out the reaction tRNA(n+1) + phosphate = tRNA(n) + a ribonucleoside 5'-diphosphate. Functionally, phosphorolytic 3'-5' exoribonuclease that plays an important role in tRNA 3'-end maturation. Removes nucleotide residues following the 3'-CCA terminus of tRNAs; can also add nucleotides to the ends of RNA molecules by using nucleoside diphosphates as substrates, but this may not be physiologically important. Probably plays a role in initiation of 16S rRNA degradation (leading to ribosome degradation) during starvation. The polypeptide is Ribonuclease PH (Sulfurihydrogenibium sp. (strain YO3AOP1)).